The primary structure comprises 88 residues: Cell division topological specificity factor (88 aa).

It belongs to the MinE family.

Prevents the cell division inhibition by proteins MinC and MinD at internal division sites while permitting inhibition at polar sites. This ensures cell division at the proper site by restricting the formation of a division septum at the midpoint of the long axis of the cell. The chain is Cell division topological specificity factor from Escherichia coli (strain SMS-3-5 / SECEC).